Here is an 894-residue protein sequence, read N- to C-terminus: MQEKIELNQEVAKPLAEKHTPMMQQYLRIKADHPDTLLFYRMGDFYELFHDDAEKAARLLDITLTARGSSNGVPIRMAGIPFHSADQYLAKLVKLGESVAICEQIGDPAASKGPVERKVVRIVTPGTLTDASLLPDKSDTFLMAVHQQTTRRGVSKTGLAWLNLASGELRLMECEAAQLAREFERIRPAELLYADGIDLPAVACARTRLPEWHFDQDAGTRRLLEQLGVASLEPFGCAGLGAAIGAAGALLNYAATTQGQSLRHVRDIKVERESEFVGLDSATRRNLELTETLRGGESPTLFSLLDTCATAMGSRALRHWLHHPLRDPALPRARQQAIGVLIDHGIDDLRSALRKLADVERITSRLALLSARPRDLSSLRDTLRALPHVRACLQAEPDSSLLSLTVAELAVPQACLDLLISAVAEEPATVVRDGGVIARGYDAELDELRDISENCGQFLVDLESRERTRTGIANLRVEYNRVHGFYIEVTNGQADKVPDDYRRRQTLKNAERYITPELKAFEDKALSAQDRALAREKQLYDVLLQALLPHIGELQRVAGALARLDVLASLAERAQTLDWSCPERVGDNVIDIVQGRHPVVEGQLAAESVPFIANDCQLNEARKLLLITGPNMGGKSTFMRQTALIVLLACVGAYVPARRAVIGPVDRIFTRIGAADDLAGGRSTFMVEMTEAAAILHHATPASLVLMDEIGRGTSTFDGLALAWAIARHLLSHNRSHTLFATHYFELTQLPQEFPQAANVHLSAVEHGDGIVFLHAVQDGPASQSYGLQVAQLAGVPQPVIRAARKHLAWLEQQSADATPTPQLDLFAPPPHPDTSDDDEPVSIGKPVQVALLPEQAAVLDALSDLDPDSLTPRAALDALYRLKVLAGEVVDAA.

629–636 lines the ATP pocket; sequence GPNMGGKS. The tract at residues 819 to 840 is disordered; that stretch reads TPTPQLDLFAPPPHPDTSDDDE.

It belongs to the DNA mismatch repair MutS family.

Functionally, this protein is involved in the repair of mismatches in DNA. It is possible that it carries out the mismatch recognition step. This protein has a weak ATPase activity. The chain is DNA mismatch repair protein MutS from Cupriavidus pinatubonensis (strain JMP 134 / LMG 1197) (Cupriavidus necator (strain JMP 134)).